Here is a 501-residue protein sequence, read N- to C-terminus: Alpha-internexin (501 aa).

Residues 1–87 (MSFGSEHYLC…SQAAARTNEY (87 aa)) form a head region. At S72 the chain carries Phosphoserine. Residues 88–129 (KIIRTNEKEQLQGLNDRFAVFIEKVHQLETQNRALEAELAAL) are coil 1A. One can recognise an IF rod domain in the interval 94–407 (EKEQLQGLND…KLLEGEETRF (314 aa)). The tract at residues 130 to 142 (RQRHAEPSRVGEL) is linker 1. The coil 1B stretch occupies residues 143–238 (FQRELRELRA…QVHDEEVAEL (96 aa)). S219 carries the phosphoserine modification. The interval 239 to 262 (LATLQASSQAAAEVDVAVAKPDLT) is linker 2. The segment at 263–408 (SALREIRAQY…LLEGEETRFS (146 aa)) is coil 2. Position 290 is an N6-acetyllysine (K290). Phosphoserine occurs at positions 335 and 498. The tail stretch occupies residues 409 to 501 (TGGLSISGLN…EESTSSSQKM (93 aa)). Residues 441 to 501 (SAGLSLKKEE…EESTSSSQKM (61 aa)) are disordered. Polar residues predominate over residues 488–501 (KSATEESTSSSQKM).

This sequence belongs to the intermediate filament family. Forms homodimers (in vitro). Forms heterodimers with NEFL, NEFM or NEFH (in vitro). O-glycosylated.

Functionally, class-IV neuronal intermediate filament that is able to self-assemble. It is involved in the morphogenesis of neurons. It may form an independent structural network without the involvement of other neurofilaments or it may cooperate with NEFL to form the filamentous backbone to which NEFM and NEFH attach to form the cross-bridges. May also cooperate with the neuronal intermediate filament protein PRPH to form filamentous networks. The polypeptide is Alpha-internexin (Ina) (Mus musculus (Mouse)).